The sequence spans 220 residues: Thioredoxin domain-containing protein (220 aa).

Positions methionine 1 to alanine 19 are cleaved as a signal peptide. Residues threonine 20 to asparagine 141 enclose the Thioredoxin domain. The Lumenal portion of the chain corresponds to threonine 20–threonine 181. Cysteine 64 and cysteine 67 are joined by a disulfide. The helical transmembrane segment at isoleucine 182 to phenylalanine 202 threads the bilayer. At threonine 203–lysine 220 the chain is on the cytoplasmic side. Residues lysine 217 to lysine 220 carry the Di-lysine motif motif.

Belongs to the protein disulfide isomerase family.

The protein localises to the endoplasmic reticulum membrane. This chain is Thioredoxin domain-containing protein, found in Theileria parva (East coast fever infection agent).